The following is a 586-amino-acid chain: A-type ATP synthase subunit A (586 aa).

232–239 (GPFGSGKT) contributes to the ATP binding site.

Belongs to the ATPase alpha/beta chains family. Has multiple subunits with at least A(3), B(3), C, D, E, F, H, I and proteolipid K(x).

It is found in the cell membrane. It carries out the reaction ATP + H2O + 4 H(+)(in) = ADP + phosphate + 5 H(+)(out). Its function is as follows. Component of the A-type ATP synthase that produces ATP from ADP in the presence of a proton gradient across the membrane. The A chain is the catalytic subunit. This is A-type ATP synthase subunit A from Methanococcus maripaludis (strain DSM 14266 / JCM 13030 / NBRC 101832 / S2 / LL).